The following is a 504-amino-acid chain: ATP-dependent rRNA helicase RRP3 (504 aa).

Residues 34-62 (ASASSAASTKESLPVSETISISTSETPVS) show a composition bias toward low complexity. Residues 34–99 (ASASSAASTK…SSSSPPSVQS (66 aa)) form a disordered region. Residues 68–79 (SNKEDLSTKKDQ) are compositionally biased toward basic and acidic residues. A compositionally biased stretch (low complexity) spans 80–99 (SSASSSSSTSSSSSPPSVQS). Residues 98–126 (QSFTEFDLVPELLESIQSLKYTQPTPIQA) carry the Q motif motif. A Helicase ATP-binding domain is found at 129–301 (IPHALQGKDI…RSLNSPVQVE (173 aa)). An ATP-binding site is contributed by 142-149 (AETGSGKT). A DEAD box motif is present at residues 248–251 (DEVD). The Helicase C-terminal domain occupies 327 to 471 (RLIQIVNLDS…DLPLDEMQGL (145 aa)).

Belongs to the DEAD box helicase family. DDX47/RRP3 subfamily. As to quaternary structure, interacts with the SSU processome.

It localises to the nucleus. It carries out the reaction ATP + H2O = ADP + phosphate + H(+). In terms of biological role, ATP-dependent rRNA helicase required for pre-ribosomal RNA processing. Involved in the maturation of the 35S-pre-rRNA and to its cleavage to mature 18S rRNA. The polypeptide is ATP-dependent rRNA helicase RRP3 (Lodderomyces elongisporus (strain ATCC 11503 / CBS 2605 / JCM 1781 / NBRC 1676 / NRRL YB-4239) (Yeast)).